Here is a 509-residue protein sequence, read N- to C-terminus: Maturase K (509 aa).

Belongs to the intron maturase 2 family. MatK subfamily.

It is found in the plastid. Its subcellular location is the chloroplast. Functionally, usually encoded in the trnK tRNA gene intron. Probably assists in splicing its own and other chloroplast group II introns. This Dalea purpurea (Violet prairie clover) protein is Maturase K.